Here is a 105-residue protein sequence, read N- to C-terminus: Antitoxin YafW (105 aa).

Belongs to the CbeA/YafW/YfjZ antitoxin family.

Antitoxin component of a type IV toxin-antitoxin (TA) system. Antitoxin that counteracts the effect of cognate toxin YkfI. It does not seem to bind to the cognate toxin but instead induces toxin loss by an unknown mechanism. Co-overexpression of toxin YkfI and antitoxin YafW leads to formation of elongated cells. The protein is Antitoxin YafW (yafW) of Escherichia coli (strain K12).